The primary structure comprises 842 residues: MRRPLCAALLAAAVLALAAGAPAAARGGAGGRSREHRDARYEIEEWEMVVGAGPAVHTFTIRCLGPRGIERVAHIANLSRLLDGYIAVHVDVARTSGLRDTMFFLPRAAVDNASAADIPDTPAVQSHPGLFGAAFSWSYLQTRHLVDYDLVPSRPLQDWYFSQARAESNAARPPPAPRVTPTPAGRVAAFDINDVLASGPEHFFVPVRADRKRRERHVADFAAVWPVSYIPAGRAVLSCERAAARLAVGLGFLSVSVTSRDLLPLEFMVAPADANVRMITAFNGGGAFPPPGPAAGPQRRAYVIGYGNSRLDSHMYLTMREVASYANEPADFRAHLTAAHREAFLMLREAAAARRGPSAGPAPNAAYHAYRVAARLGLALSALTEGALADGYVLAEELVDLDYHLKLLSRVLLGAGLGCAANGRVRARTIAQLAVPRELRPDAFIPEPAGAALESVVARGRKLRAVYAFSGPDAPLAARLLAHGVVSDLYDAFLRGELTWGPPMRHALFFAVAASAFPADAQALELARDVTRKCTAMCTAGHATAAALDLEEVYAHVGGGAGGDAGFELLDAFSPCMASFRLDLLEEAHVLDVLSAVPARAALDAWLEAQPAAAAPNLSAAALGMLGRGGLFGPAHAAALAPELFAAPCGGWGAGAAVAIVPVAPNASYVITRAHPRRGLTYTLQGIDVANPLLVTFVRGTSCVSASGAVEARRLAVPGPLDACAYCGSVFVRYLPSGAVMDIVLIADKRTEVEFSRGANSSMPVFNPRLHSGRSRAMLLFPNGTVVSVLAFAGHEAPTFSPAYVWASVGGALVAGTTIYAIAKMLCSSVPLARGYSSVPVF.

A signal peptide spans 1-20; sequence MRRPLCAALLAAAVLALAAG. The Virion surface portion of the chain corresponds to 21–802; that stretch reads APAAARGGAG…AGHEAPTFSP (782 aa). N77 and N112 each carry an N-linked (GlcNAc...) asparagine; by host glycan. Residues 240–303 are interaction with gL; sequence ERAAARLAVG…AAGPQRRAYV (64 aa). N617, N666, N760, and N783 each carry an N-linked (GlcNAc...) asparagine; by host glycan. The chain crosses the membrane as a helical span at residues 803-823; sequence AYVWASVGGALVAGTTIYAIA. Topologically, residues 824–842 are intravirion; the sequence is KMLCSSVPLARGYSSVPVF.

This sequence belongs to the herpesviridae glycoprotein H family. Interacts with glycoprotein L (gL); this interaction is necessary for the correct processing and cell surface expression of gH. The heterodimer gH/gL seems to interact with gB trimers during fusion. In terms of processing, N-glycosylated, O-glycosylated, and sialylated.

The protein resides in the virion membrane. The protein localises to the host cell membrane. It is found in the host endosome membrane. In terms of biological role, the heterodimer glycoprotein H-glycoprotein L is required for the fusion of viral and plasma membranes leading to virus entry into the host cell. Following initial binding to host receptor, membrane fusion is mediated by the fusion machinery composed of gB and the heterodimer gH/gL. May also be involved in the fusion between the virion envelope and the outer nuclear membrane during virion morphogenesis. This is Envelope glycoprotein H from Bos taurus (Bovine).